We begin with the raw amino-acid sequence, 345 residues long: Heat stress transcription factor A-2 (345 aa).

Residues 17 to 30 (GSVAASSSVGSSSS) are compositionally biased toward low complexity. Residues 17–40 (GSVAASSSVGSSSSPRPMEGLNET) are disordered. A DNA-binding region spans residues 42 to 136 (PPPFLTKTYE…LLKNIKRRRN (95 aa)). Residues 150 to 216 (SCVEVGQYGF…QMMTFLAKAL (67 aa)) form a hydrophobic repeat HR-A/B region. A Nuclear localization signal motif is present at residues 231–238 (EKKSLFGL). The short motif at 273–282 (EMLFAAAIDD) is the AHA1 element. A Glycyl lysine isopeptide (Lys-Gly) (interchain with G-Cter in SUMO) cross-link involves residue K315. An AHA2 motif is present at residues 324 to 333 (LDWDSQDLHD). A Nuclear export signal motif is present at residues 334–341 (MVDQMGFL).

It belongs to the HSF family. Class A subfamily. As to quaternary structure, homotrimer. Interacts with SUMO1. Binds to HSBP. Exhibits temperature-dependent phosphorylation. Post-translationally, sumoylated at Lys-315. Sumoylation represses its function.

It localises to the cytoplasm. Its subcellular location is the nucleus. Transcriptional activator that specifically binds DNA sequence 5'-AGAAnnTTCT-3' known as heat shock promoter elements (HSE). Seems to be involved in other environmental stress responses. Activates ascorbate peroxidase 2 (APX2) in addition to several heat shock protein (HSPs). Binds to the promoter of SGIP1 and activates its expression in heat acclimated plants. Involved in the mechanisms necessary for quick response to heat and subsequent heritable transgenerational memory of heat acclimation (global warming) such as early flowering and attenuated immunity; this process includes epigenetic regulation as well as post-transcriptional gene silencing (PTGS). In response to heat, HSFA2 is activated and promotes the expression of REF6 which in turn derepresses HSFA2, thus establishing an inheritable feedback loop able to trigger SGIP1 and subsequent SGIP1-mediated SGS3 degradation; this prevents the biosynthesis of trans-acting siRNA (tasiRNA) and leads to the release of HTT5, which drives early flowering but attenuates immunity. In Arabidopsis thaliana (Mouse-ear cress), this protein is Heat stress transcription factor A-2.